The sequence spans 343 residues: Aspartate carbamoyltransferase catalytic subunit (343 aa).

Carbamoyl phosphate is bound by residues Arg91 and Thr92. Lys119 lines the L-aspartate pocket. Carbamoyl phosphate contacts are provided by Arg141, His171, and Gln174. Residues Arg204 and Arg259 each coordinate L-aspartate. Residues Gly300 and Pro301 each coordinate carbamoyl phosphate.

It belongs to the aspartate/ornithine carbamoyltransferase superfamily. ATCase family. In terms of assembly, heterododecamer (2C3:3R2) of six catalytic PyrB chains organized as two trimers (C3), and six regulatory PyrI chains organized as three dimers (R2).

The enzyme catalyses carbamoyl phosphate + L-aspartate = N-carbamoyl-L-aspartate + phosphate + H(+). Its pathway is pyrimidine metabolism; UMP biosynthesis via de novo pathway; (S)-dihydroorotate from bicarbonate: step 2/3. Functionally, catalyzes the condensation of carbamoyl phosphate and aspartate to form carbamoyl aspartate and inorganic phosphate, the committed step in the de novo pyrimidine nucleotide biosynthesis pathway. The polypeptide is Aspartate carbamoyltransferase catalytic subunit (Burkholderia mallei (strain NCTC 10247)).